A 63-amino-acid polypeptide reads, in one-letter code: MFALVLFVCYLDGGCEDIVVDVYNTEQQCLYSMSDQRIRQGGCFPIEDFIDGFWRPAQEYGDF.

This is an uncharacterized protein from Escherichia coli (strain K12).